Here is a 149-residue protein sequence, read N- to C-terminus: 2S seed storage albumin protein (149 aa).

A signal peptide spans Met-1–Pro-22. Cystine bridges form between Cys-38/Cys-98, Cys-52/Cys-87, Cys-88/Cys-133, and Cys-100/Cys-140. An igE-binding region spans residues Glu-121 to Glu-128.

Belongs to the 2S seed storage albumins family. As to expression, expressed in seeds (at protein level).

Its function is as follows. Seed storage protein. The sequence is that of 2S seed storage albumin protein from Fagopyrum esculentum (Common buckwheat).